Here is a 319-residue protein sequence, read N- to C-terminus: N-acyl-aromatic-L-amino acid amidohydrolase (carboxylate-forming) (319 aa).

The interval 1 to 210 (MCSLPGSRKP…SILDFIELFN (210 aa)) is hydrolytic domain. His21 and Glu24 together coordinate Zn(2+). Substrate contacts are provided by residues Arg63 and 70-71 (NR). His116 contacts Zn(2+). Glu178 and Tyr288 together coordinate substrate. Residues 211–318 (QGMEFPAFEM…PGLTPSSTQT (108 aa)) are shielding domain. Phosphothreonine is present on Thr318.

This sequence belongs to the AspA/AstE family. Aspartoacylase subfamily. Exists as a mixture of homodimers and homotetramer, both catalytically active. The cofactor is Zn(2+).

It localises to the apical cell membrane. Its subcellular location is the cytoplasm. It catalyses the reaction an N-acyl-aromatic L-alpha-amino acid + H2O = an aromatic L-alpha-amino acid + a carboxylate. It carries out the reaction an N-acetyl-L-cysteine-S-conjugate + H2O = an S-substituted L-cysteine + acetate. Plays an important role in deacetylating mercapturic acids in kidney proximal tubules. Also acts on N-acetyl-aromatic amino acids. The chain is N-acyl-aromatic-L-amino acid amidohydrolase (carboxylate-forming) (Acy3) from Rattus norvegicus (Rat).